Reading from the N-terminus, the 201-residue chain is Ras-related protein Rab-5A (201 aa).

Residues 16-24 (GEAAVGKSS), 35-41 (LDYQEST), 64-68 (DTAGQ), 122-125 (NKLD), and 152-154 (SAK) contribute to the GTP site. The Effector region signature appears at 38 to 46 (QESTIGAAF). S-geranylgeranyl cysteine attachment occurs at residues C199 and C200.

This sequence belongs to the small GTPase superfamily. Rab family.

It is found in the cell membrane. Its subcellular location is the endosome membrane. With respect to regulation, regulated by guanine nucleotide exchange factors (GEFs) which promote the exchange of bound GDP for free GTP. In terms of biological role, required for the fusion of plasma membranes and early endosomes. The sequence is that of Ras-related protein Rab-5A (rab5A) from Dictyostelium discoideum (Social amoeba).